Consider the following 816-residue polypeptide: MKLLKFGGTSLANAEKFLSVSSIIEENTQTDQIAVVLSAPAKITNYLVKIIENTIKNNQILETVHLAENIFMQLINNFLNIQSNFPHKEIEKIIKKEFNELKNIIQGILLLKQCPDNIRAIIISRGEILSVFIMKSILQSKNYNVTIINPVKNLVAIGDNYLDSTVDISESKKNIQNMNINQSNIILMAGFIAGNKDKKLVVLGRNGSDYSAAVLAACLDANCCEIWTDVDGVFTSDPRKVPNARLLKSISYQEAMELSYFGAKVLHPRTIEPIAQFKIPCLIKNTNNVKSIGTLICEQNCSEKDFLKGVTHLDEIAMFNISGPHIKDVGSVISRIFTMMSRGNIKILLITQSSSENKINFCVYEHDIYKILYLFNKEFQLELKDGLLNPFKIKKNLSILSIVGSNIYKKHNIASKIFSVLGALKINVIAISQGSSKHSISLVIKKENILKAVQHVHNTLFFNKKTIHMFLIGIGGIGSTLLNQILKQKQFLDKKNIEIKICAIANSKKILLLDNTNDLSNWKNDFKKSTQKFNLELLNNLIKNNHFSNSVIVDCTSSQLLSEQYVNFIDNNFHVVTSNKKANTSEWNYYKKIRKSVAQTGKKFLYETNVGAGLPVIETLQNLFKSGDNLICFKGILSGSLSFIFGRLEEGILLSQATREAKELGFTEPNPCDDLSGIDVARKLLILARESGYNIELKDIKIEPLLPNNFKIYEDTDKFLLKLKELDVYFSNKIKQALNVGNVLRFVATIEQKRQFFIKLEEVNINNPLYKVKNGENALAFYTNYYQPIPLVLRGYGAGNNVTASGVFSDLLRTLS.

Residues 1–250 (MKLLKFGGTS…VPNARLLKSI (250 aa)) form an aspartokinase region. The tract at residues 251 to 471 (SYQEAMELSY…FNKKTIHMFL (221 aa)) is interface. The 78-residue stretch at 402–479 (IVGSNIYKKH…FLIGIGGIGS (78 aa)) folds into the ACT domain. The interval 472 to 816 (IGIGGIGSTL…VFSDLLRTLS (345 aa)) is homoserine dehydrogenase. Residues G476, I477, and A505 each coordinate NAD(+). Residue I477 coordinates NADP(+). I477 provides a ligand contact to NADPH. Positions 508 and 556 each coordinate NADP(+). An NAD(+)-binding site is contributed by T556. T556, S557, S578, and K580 together coordinate NADPH. NADP(+) contacts are provided by S578 and K580. Residues E607, V610, A612, and L614 each contribute to the Na(+) site. The NADP(+) site is built by G665 and E668. Residues E668 and D679 each contribute to the L-homoserine site. Residue K683 is the Proton donor of the active site. G799 is a binding site for NAD(+). Position 799 (G799) interacts with NADP(+). G799 is an NADPH binding site.

It in the N-terminal section; belongs to the aspartokinase family. The protein in the C-terminal section; belongs to the homoserine dehydrogenase family. As to quaternary structure, homotetramer. The cofactor is a metal cation.

The catalysed reaction is L-homoserine + NADP(+) = L-aspartate 4-semialdehyde + NADPH + H(+). It catalyses the reaction L-homoserine + NAD(+) = L-aspartate 4-semialdehyde + NADH + H(+). It carries out the reaction L-aspartate + ATP = 4-phospho-L-aspartate + ADP. Its pathway is amino-acid biosynthesis; L-lysine biosynthesis via DAP pathway; (S)-tetrahydrodipicolinate from L-aspartate: step 1/4. The protein operates within amino-acid biosynthesis; L-methionine biosynthesis via de novo pathway; L-homoserine from L-aspartate: step 1/3. It functions in the pathway amino-acid biosynthesis; L-methionine biosynthesis via de novo pathway; L-homoserine from L-aspartate: step 3/3. It participates in amino-acid biosynthesis; L-threonine biosynthesis; L-threonine from L-aspartate: step 1/5. Its pathway is amino-acid biosynthesis; L-threonine biosynthesis; L-threonine from L-aspartate: step 3/5. Its function is as follows. Bifunctional aspartate kinase and homoserine dehydrogenase that catalyzes the first and the third steps toward the synthesis of lysine, methionine and threonine from aspartate. This is Bifunctional aspartokinase/homoserine dehydrogenase (thrA) from Buchnera aphidicola subsp. Acyrthosiphon pisum (strain APS) (Acyrthosiphon pisum symbiotic bacterium).